Here is a 116-residue protein sequence, read N- to C-terminus: S-adenosylmethionine decarboxylase proenzyme (116 aa).

Serine 63 serves as the catalytic Schiff-base intermediate with substrate; via pyruvic acid. Serine 63 is subject to Pyruvic acid (Ser); by autocatalysis. Histidine 68 (proton acceptor; for processing activity) is an active-site residue. Cysteine 83 functions as the Proton donor; for catalytic activity in the catalytic mechanism.

Belongs to the prokaryotic AdoMetDC family. Type 1 subfamily. As to quaternary structure, heterotetramer of two alpha and two beta chains arranged as a dimer of alpha/beta heterodimers. The cofactor is pyruvate. Post-translationally, is synthesized initially as an inactive proenzyme. Formation of the active enzyme involves a self-maturation process in which the active site pyruvoyl group is generated from an internal serine residue via an autocatalytic post-translational modification. Two non-identical subunits are generated from the proenzyme in this reaction, and the pyruvate is formed at the N-terminus of the alpha chain, which is derived from the carboxyl end of the proenzyme. The post-translation cleavage follows an unusual pathway, termed non-hydrolytic serinolysis, in which the side chain hydroxyl group of the serine supplies its oxygen atom to form the C-terminus of the beta chain, while the remainder of the serine residue undergoes an oxidative deamination to produce ammonia and the pyruvoyl group blocking the N-terminus of the alpha chain.

The catalysed reaction is S-adenosyl-L-methionine + H(+) = S-adenosyl 3-(methylsulfanyl)propylamine + CO2. The protein operates within amine and polyamine biosynthesis; S-adenosylmethioninamine biosynthesis; S-adenosylmethioninamine from S-adenosyl-L-methionine: step 1/1. Functionally, catalyzes the decarboxylation of S-adenosylmethionine to S-adenosylmethioninamine (dcAdoMet), the propylamine donor required for the synthesis of the polyamines spermine and spermidine from the diamine putrescine. This Clostridium botulinum (strain Okra / Type B1) protein is S-adenosylmethionine decarboxylase proenzyme.